Here is a 146-residue protein sequence, read N- to C-terminus: Ferric uptake regulation protein 2 (146 aa).

Zn(2+)-binding residues include C96 and C99.

Belongs to the Fur family.

Its subcellular location is the cytoplasm. In terms of biological role, acts as a global negative controlling element, employing Fe(2+) as a cofactor to bind the operator of the repressed genes. This chain is Ferric uptake regulation protein 2 (fur2), found in Mycolicibacterium fortuitum (Mycobacterium fortuitum).